Consider the following 1410-residue polypeptide: Ribosome-binding protein 1 (1410 aa).

Over 1–7 (MDIYDTQ) the chain is Lumenal. The helical transmembrane segment at 8–28 (TLGVVVFGGFMVVSAIGIFLV) threads the bilayer. The Cytoplasmic portion of the chain corresponds to 29–1410 (STFSMKETSY…GSSSKEGTSV (1382 aa)). Disordered stretches follow at residues 44–90 (NQRK…DPAP) and 129–152 (QEKL…VEPA). Over residues 52–63 (THHQKVEKKKKE) the composition is skewed to basic residues. The span at 64-88 (KTVEKKGKTKKKEEKPNGKIPDHDP) shows a compositional bias: basic and acidic residues. A Glycyl lysine isopeptide (Lys-Gly) (interchain with G-Cter in SUMO2) cross-link involves residue K148. Phosphoserine is present on residues S159 and S165. 2 disordered regions span residues 173–648 (APKE…PLYL) and 895–925 (QSSH…LQSS). Polar residues-rich tracts occupy residues 191-209 (TPAT…QNQS) and 225-238 (TPNQ…TPNQ). 33 consecutive repeat copies span residues 197–206 (TQGKKAEGTQ), 207–216 (NQSKKAEGAP), 217–226 (NQGRKAEGTP), 227–236 (NQGKKTEGTP), 237–246 (NQGKKAEGTP), 247–256 (NQGKKAEGTP), 257–266 (NQGKKAEGAQ), 267–276 (NQGKKVDTTP), 277–286 (NQGKKVEGAP), 287–296 (TQGRKAEGAQ), 297–306 (NQAKKVEGAQ), 307–316 (NQGKKAEGAQ), 317–326 (NQGKKGEGAQ), 327–336 (NQGKKAEGAQ), 337–346 (NQGKKAEGAQ), 347–356 (NQGKKAEGAQ), 357–366 (NQGKKAEGAQ), 367–376 (NQGKKAEGAQ), 377–386 (NQGKKAEGAQ), 387–396 (NQGKKVEGAQ), 397–406 (NQGKKAEGAQ), 407–416 (NQGKKAEGAQ), 417–426 (NQGKKAEGAQ), 427–436 (NQGKKAEGAQ), 437–446 (NQGKKAEGAQ), 447–456 (NQGKKAEGAQ), 457–466 (NQGKKAEGAQ), 467–476 (NQGKKVEGAQ), 477–486 (NQGKKAEGAQ), 487–496 (NQGKKAEGAQ), 497–506 (NQGKKAEGAQ), 507–516 (NQGQKGEGAQ), and 517–526 (NQGKKTEGAQ). The interval 197 to 604 (TQGKKAEGTQ…NQGKKTESAS (408 aa)) is 41 X 10 AA approximate tandem repeats of [TN]-Q-[GSA]-[KRQT]-K-[ATGSV]-[ED]-[GTAS]-[ATIS]-[PQTAS]. T225, T235, T245, and T255 each carry phosphothreonine. Composition is skewed to polar residues over residues 265–278 (AQNQ…TPNQ) and 295–519 (AQNQ…QNQG). Positions 520–532 (KKTEGAQGKKAER) are enriched in basic and acidic residues. One copy of the 34; approximate repeat lies at 527–534 (GKKAERSP). S533 is subject to Phosphoserine. Residues 535-544 (NQGKKGEGAP) form repeat 35. A 36; approximate repeat occupies 545–554 (IQGKKADSVA). Positions 553–567 (VANQGTKVEGITNQG) are enriched in polar residues. A run of 2 repeats spans residues 555 to 564 (NQGTKVEGIT) and 565 to 574 (NQGKKAEGSP). Positions 568 to 581 (KKAEGSPSEGKKAE) are enriched in basic and acidic residues. Phosphoserine is present on residues S573 and S583. A 39; approximate repeat occupies 575-584 (SEGKKAEGSP). Tandem repeats lie at residues 585-594 (NQGKKADAAA) and 595-604 (NQGKKTESAS). A compositionally biased stretch (polar residues) spans 602 to 612 (SASVQGRNTDV). Residue S615 is modified to Phosphoserine. A Glycyl lysine isopeptide (Lys-Gly) (interchain with G-Cter in SUMO1) cross-link involves residue K620. Residue S900 is modified to Phosphoserine. K932 is modified (N6-acetyllysine). S959 and S978 each carry phosphoserine. Disordered stretches follow at residues 1093–1122 (GPTL…ETQS), 1260–1287 (EMKS…EQDP), 1330–1362 (EKLR…LTSD), and 1378–1410 (QEQL…GTSV). A phosphoserine mark is found at S1276 and S1277. Composition is skewed to basic and acidic residues over residues 1347–1360 (SQLK…KKLT) and 1381–1403 (LARE…DGSS).

It localises to the endoplasmic reticulum membrane. Functionally, acts as a ribosome receptor and mediates interaction between the ribosome and the endoplasmic reticulum membrane. This Homo sapiens (Human) protein is Ribosome-binding protein 1 (RRBP1).